Here is a 370-residue protein sequence, read N- to C-terminus: GTPase Obg (370 aa).

One can recognise an Obg domain in the interval 1 to 159 (MKFIDEARIE…RKLKLELKVL (159 aa)). Positions 129 to 148 (HFKSSTNRAPRQKTNGKSGE) are disordered. Over residues 130 to 145 (FKSSTNRAPRQKTNGK) the composition is skewed to polar residues. The region spanning 160–334 (ADVGLLGMPN…LCYSLQDYLD (175 aa)) is the OBG-type G domain. GTP-binding positions include 166–173 (GMPNAGKS), 191–195 (FTTLH), 213–216 (DIPG), 284–287 (NKVD), and 315–317 (SAL). Residues Ser-173 and Thr-193 each coordinate Mg(2+).

The protein belongs to the TRAFAC class OBG-HflX-like GTPase superfamily. OBG GTPase family. As to quaternary structure, monomer. It depends on Mg(2+) as a cofactor.

It localises to the cytoplasm. An essential GTPase which binds GTP, GDP and possibly (p)ppGpp with moderate affinity, with high nucleotide exchange rates and a fairly low GTP hydrolysis rate. Plays a role in control of the cell cycle, stress response, ribosome biogenesis and in those bacteria that undergo differentiation, in morphogenesis control. The chain is GTPase Obg from Polynucleobacter necessarius subsp. necessarius (strain STIR1).